We begin with the raw amino-acid sequence, 191 residues long: Probable DNA-directed RNA polymerase subunit delta (191 aa).

An HTH HARE-type domain is found at 14–83 (LSMIEVARAI…GENKWGLRSW (70 aa)). The disordered stretch occupies residues 119–191 (EDAIDYRDDD…EDEEDEEPVL (73 aa)).

As to quaternary structure, RNAP is composed of a core of 2 alpha, a beta and a beta' subunits. The core is associated with a delta subunit and one of several sigma factors.

Functionally, participates in both the initiation and recycling phases of transcription. In the presence of the delta subunit, RNAP displays an increased specificity of transcription, a decreased affinity for nucleic acids, and an increased efficiency of RNA synthesis because of enhanced recycling. This is Probable DNA-directed RNA polymerase subunit delta from Streptococcus pyogenes serotype M6 (strain ATCC BAA-946 / MGAS10394).